We begin with the raw amino-acid sequence, 473 residues long: Arginine biosynthesis bifunctional protein ArgJ, mitochondrial (473 aa).

The substrate site is built by T201, K230, T241, E328, N468, and T473. T241 (nucleophile) is an active-site residue.

The protein belongs to the ArgJ family. In terms of assembly, heterodimer of an alpha and a beta chain. Post-translationally, the alpha and beta chains are autoproteolytically processed from a single precursor protein within the mitochondrion.

The protein resides in the mitochondrion matrix. It carries out the reaction N(2)-acetyl-L-ornithine + L-glutamate = N-acetyl-L-glutamate + L-ornithine. It catalyses the reaction L-glutamate + acetyl-CoA = N-acetyl-L-glutamate + CoA + H(+). It functions in the pathway amino-acid biosynthesis; L-arginine biosynthesis; L-ornithine and N-acetyl-L-glutamate from L-glutamate and N(2)-acetyl-L-ornithine (cyclic): step 1/1. It participates in amino-acid biosynthesis; L-arginine biosynthesis; N(2)-acetyl-L-ornithine from L-glutamate: step 1/4. Its function is as follows. Catalyzes two activities which are involved in the cyclic version of arginine biosynthesis: the synthesis of acetylglutamate from glutamate and acetyl-CoA, and of ornithine by transacetylation between acetylornithine and glutamate. The protein is Arginine biosynthesis bifunctional protein ArgJ, mitochondrial of Paracoccidioides brasiliensis (strain Pb18).